Reading from the N-terminus, the 397-residue chain is MQSLTILGSTGSIGKATLSVIQQHTDKFFVHALVAKNNVAIMTEQCIAMSPKYACMISEDAARILKKNLITAGKYDIEVLSGVMHACELASTNDVDMVMSAIVGIAGLKPTFSALRAGKKILLANKETLVTGGKLFMKEANRYRACILPIDSEHNAIFQNLPEICQKSLGNTSLSECGISRIVLTASGGIFFKTPQKQLTKITPEQACVHPNWSMGRKISVDSATMMNKGLEYIEARHLFNAKPSEIEILLHPQSIVHAMVYYSDGNVLAHLAPPDMRIPIAYAMAYPKRIGLKISSNIDIYYLNKLHFDQLDNCSYPCFQLAIDADNCSQSATIILNAANEIAVEAFLRKMISFTDIPDVIRRVLDAINLNDPNDIEDILYIDQKAREKAISICVI.

Residues Thr-10, Gly-11, Ser-12, Ile-13, Asn-38, and Asn-125 each coordinate NADPH. Lys-126 contributes to the 1-deoxy-D-xylulose 5-phosphate binding site. Glu-127 contacts NADPH. Asp-151 is a Mn(2+) binding site. Residues Ser-152, Glu-153, Ser-187, and His-210 each coordinate 1-deoxy-D-xylulose 5-phosphate. Position 153 (Glu-153) interacts with Mn(2+). Gly-216 provides a ligand contact to NADPH. The 1-deoxy-D-xylulose 5-phosphate site is built by Ser-223, Asn-228, Lys-229, and Glu-232. Residue Glu-232 coordinates Mn(2+).

This sequence belongs to the DXR family. Homodimer. Mg(2+) serves as cofactor. Mn(2+) is required as a cofactor.

It carries out the reaction 2-C-methyl-D-erythritol 4-phosphate + NADP(+) = 1-deoxy-D-xylulose 5-phosphate + NADPH + H(+). It participates in isoprenoid biosynthesis; isopentenyl diphosphate biosynthesis via DXP pathway; isopentenyl diphosphate from 1-deoxy-D-xylulose 5-phosphate: step 1/6. Functionally, catalyzes the NADPH-dependent rearrangement and reduction of 1-deoxy-D-xylulose-5-phosphate (DXP) to 2-C-methyl-D-erythritol 4-phosphate (MEP). The protein is 1-deoxy-D-xylulose 5-phosphate reductoisomerase of Blochmanniella pennsylvanica (strain BPEN).